The primary structure comprises 376 residues: DNA-directed RNA polymerase subunit alpha (376 aa).

The interval 1–259 (MSDCSQNLLY…KHFSIFEKMD (259 aa)) is alpha N-terminal domain (alpha-NTD). Residues 276–376 (KDDILHKLVL…DKIRSKNGKG (101 aa)) form an alpha C-terminal domain (alpha-CTD) region.

It belongs to the RNA polymerase alpha chain family. Homodimer. The RNAP catalytic core consists of 2 alpha, 1 beta, 1 beta' and 1 omega subunit. When a sigma factor is associated with the core the holoenzyme is formed, which can initiate transcription.

It catalyses the reaction RNA(n) + a ribonucleoside 5'-triphosphate = RNA(n+1) + diphosphate. DNA-dependent RNA polymerase catalyzes the transcription of DNA into RNA using the four ribonucleoside triphosphates as substrates. This Chlamydia abortus (strain DSM 27085 / S26/3) (Chlamydophila abortus) protein is DNA-directed RNA polymerase subunit alpha.